The sequence spans 128 residues: Aspartate 1-decarboxylase (128 aa).

The Schiff-base intermediate with substrate; via pyruvic acid role is filled by Ser25. A Pyruvic acid (Ser) modification is found at Ser25. Thr57 serves as a coordination point for substrate. Residue Tyr58 is the Proton donor of the active site. Residue Gly73 to Ala75 participates in substrate binding.

Belongs to the PanD family. Heterooctamer of four alpha and four beta subunits. It depends on pyruvate as a cofactor. Is synthesized initially as an inactive proenzyme, which is activated by self-cleavage at a specific serine bond to produce a beta-subunit with a hydroxyl group at its C-terminus and an alpha-subunit with a pyruvoyl group at its N-terminus.

It localises to the cytoplasm. It carries out the reaction L-aspartate + H(+) = beta-alanine + CO2. Its pathway is cofactor biosynthesis; (R)-pantothenate biosynthesis; beta-alanine from L-aspartate: step 1/1. In terms of biological role, catalyzes the pyruvoyl-dependent decarboxylation of aspartate to produce beta-alanine. The chain is Aspartate 1-decarboxylase from Burkholderia multivorans (strain ATCC 17616 / 249).